A 226-amino-acid chain; its full sequence is Exopolysaccharide production protein ExoY (226 aa).

The chain crosses the membrane as a helical span at residues 34 to 54 (VLAASVALLLFSPLFLLIMAL).

Belongs to the bacterial sugar transferase family.

The protein localises to the cell membrane. It functions in the pathway glycan metabolism; exopolysaccharide biosynthesis. Functionally, needed for the addition of the first sugar (galactose) to the isoprenoid carrier. May function as a sugar transferase. The protein is Exopolysaccharide production protein ExoY (exoY) of Rhizobium meliloti (strain 1021) (Ensifer meliloti).